Reading from the N-terminus, the 458-residue chain is UDP-N-acetylmuramoylalanine--D-glutamate ligase (458 aa).

124–130 (GSDGKTT) is a binding site for ATP.

It belongs to the MurCDEF family.

The protein localises to the cytoplasm. It carries out the reaction UDP-N-acetyl-alpha-D-muramoyl-L-alanine + D-glutamate + ATP = UDP-N-acetyl-alpha-D-muramoyl-L-alanyl-D-glutamate + ADP + phosphate + H(+). Its pathway is cell wall biogenesis; peptidoglycan biosynthesis. Its function is as follows. Cell wall formation. Catalyzes the addition of glutamate to the nucleotide precursor UDP-N-acetylmuramoyl-L-alanine (UMA). The sequence is that of UDP-N-acetylmuramoylalanine--D-glutamate ligase from Clostridium botulinum (strain Langeland / NCTC 10281 / Type F).